A 185-amino-acid chain; its full sequence is Ubiquitin-conjugating enzyme E2 2 (185 aa).

In terms of domain architecture, UBC core spans 4–150 (PSKKRLIRDF…VKATVEASWL (147 aa)). The active-site Glycyl thioester intermediate is the C88. A compositionally biased stretch (acidic residues) spans 149-173 (WLDDGEMPESIEEDDEAEAEAEAEA). Residues 149 to 185 (WLDDGEMPESIEEDDEAEAEAEAEATVDRSAPQTASA) are disordered.

Belongs to the ubiquitin-conjugating enzyme family.

It localises to the cytoplasm. The protein resides in the nucleus. The enzyme catalyses S-ubiquitinyl-[E1 ubiquitin-activating enzyme]-L-cysteine + [E2 ubiquitin-conjugating enzyme]-L-cysteine = [E1 ubiquitin-activating enzyme]-L-cysteine + S-ubiquitinyl-[E2 ubiquitin-conjugating enzyme]-L-cysteine.. It participates in protein modification; protein ubiquitination. Catalyzes the covalent attachment of ubiquitin to other proteins. Plays a role in transcription regulation by catalyzing the monoubiquitination of histone H2B to form H2BK123ub1. H2BK123ub1 gives a specific tag for epigenetic transcriptional activation and is also a prerequisite for H3K4me and H3K79me formation. Also involved in postreplication repair of UV-damaged DNA, in N-end rule-dependent protein degradation and in sporulation. The protein is Ubiquitin-conjugating enzyme E2 2 (UBC2) of Mycosarcoma maydis (Corn smut fungus).